The following is a 187-amino-acid chain: UPF0301 protein VF_0434 (187 aa).

The protein belongs to the UPF0301 (AlgH) family.

This chain is UPF0301 protein VF_0434, found in Aliivibrio fischeri (strain ATCC 700601 / ES114) (Vibrio fischeri).